A 478-amino-acid chain; its full sequence is Zinc metalloproteinase/disintegrin (478 aa).

Residues 1 to 20 (MIQVLLVTICLAVFPYQGSS) form the signal peptide. The propeptide occupies 21–194 (KTLKSGNVND…KASQLNLTPE (174 aa)). Gln195 bears the Pyrrolidone carboxylic acid mark. A Peptidase M12B domain is found at 201–397 (RYIELVIVAD…RNPQCILNQP (197 aa)). Residues Glu204 and Asp288 each coordinate Ca(2+). 3 cysteine pairs are disulfide-bonded: Cys312–Cys392, Cys352–Cys376, and Cys354–Cys359. His337 contacts Zn(2+). Glu338 is a catalytic residue. Residues His341 and His347 each coordinate Zn(2+). Residues Cys392 and Asn395 each coordinate Ca(2+). A propeptide spanning residues 398-413 (LRTDTVSTPVSGNELL) is cleaved from the precursor. A Disintegrin domain is found at 405–478 (TPVSGNELLQ…SDCPRNPYKD (74 aa)). 4 disulfide bridges follow: Cys420-Cys443, Cys434-Cys440, Cys439-Cys464, and Cys452-Cys471. A Cell attachment site; atypical (VGD) motif is present at residues 456–458 (VGD).

Belongs to the venom metalloproteinase (M12B) family. P-II subfamily. P-IIe sub-subfamily. In terms of assembly, monomer (metalloproteinase). Heterodimer; disulfide-linked (disintegrin). Zn(2+) serves as cofactor. Expressed by the venom gland.

The protein localises to the secreted. Fibrinolytic and caseinolytic activities are inhibited by Cd(2+), Cu(2+) and Co(2+) ions. Not inhibited by Mg(2+), Ca(2+) and Ba(2+). Also inhibited by EDTA, EGTA and 1,10-phenanthroline. Fibrinolytic and fibrinogenolytic metalloproteinase that hydrolyzes the Aalpha-chain and more slowly the Bbeta-chain of fibrin and fibrinogen. Its fibrinolytic activity is direct, without any plasminogen activation. Also hydrolyzes casein and B-chain of oxidized insulin. Inhibits ADP-induced and collagen-induced platelet aggregation. Shows low hemorrhagic activity. Cleaves the plasma proteinase inhibitors alpha(2)-macroglobulin (A2M) and pregnancy zone protein (PZP), and is inhibited by them. The metalloprotease has no strict P1-P1' specificity requirement. Hydrolysis at sites with a Pro residue at P1 is observed with bradykinin, substance P, PZP and alpha chain fibrinogen (FGA). Functionally, poor inhibitor of platelet aggregation. The disintegrin inhibits the adhesion of the alpha-4/beta-1 (ITGA4/ITGB1) integrin to VCAM-1. Inhibition on alpha-2b/beta-3 (ITGA2B/ITGB3) is low. The polypeptide is Zinc metalloproteinase/disintegrin (Macrovipera lebetinus (Levantine viper)).